Consider the following 237-residue polypeptide: Neurogenin-1 (237 aa).

The disordered stretch occupies residues 35–83 (LQQAASASGPPAPARRGAPNISRASEVPGAQDDEQERRRRRGRTRVRSE). The segment covering 38–53 (AASASGPPAPARRGAP) has biased composition (low complexity). The bHLH domain occupies 92-144 (SRRVKANDRERNRMHNLNAALDALRSVLPSFPDDTKLTKIETLRFAYNYIWAL). Positions 175-209 (GPPSPASDAESWGSGAAAASPLSDPSSPAASEDFT) are disordered. Residues 180 to 207 (ASDAESWGSGAAAASPLSDPSSPAASED) show a composition bias toward low complexity.

Efficient DNA binding requires dimerization with another bHLH protein. As to expression, expression restricted to the embryonic nervous system.

The protein localises to the nucleus. Acts as a transcriptional regulator. Involved in the initiation of neuronal differentiation. Activates transcription by binding to the E box (5'-CANNTG-3'). Associates with chromatin to enhancer regulatory elements in genes encoding key transcriptional regulators of neurogenesis. The sequence is that of Neurogenin-1 (NEUROG1) from Homo sapiens (Human).